Consider the following 145-residue polypeptide: D-aminoacyl-tRNA deacylase (145 aa).

The Gly-cisPro motif, important for rejection of L-amino acids motif lies at 137-138; it reads GP.

The protein belongs to the DTD family. Homodimer.

It is found in the cytoplasm. The catalysed reaction is glycyl-tRNA(Ala) + H2O = tRNA(Ala) + glycine + H(+). The enzyme catalyses a D-aminoacyl-tRNA + H2O = a tRNA + a D-alpha-amino acid + H(+). Functionally, an aminoacyl-tRNA editing enzyme that deacylates mischarged D-aminoacyl-tRNAs. Also deacylates mischarged glycyl-tRNA(Ala), protecting cells against glycine mischarging by AlaRS. Acts via tRNA-based rather than protein-based catalysis; rejects L-amino acids rather than detecting D-amino acids in the active site. By recycling D-aminoacyl-tRNA to D-amino acids and free tRNA molecules, this enzyme counteracts the toxicity associated with the formation of D-aminoacyl-tRNA entities in vivo and helps enforce protein L-homochirality. This is D-aminoacyl-tRNA deacylase from Chromohalobacter salexigens (strain ATCC BAA-138 / DSM 3043 / CIP 106854 / NCIMB 13768 / 1H11).